The sequence spans 437 residues: Sodium/bile acid cotransporter 4 (437 aa).

Over 1 to 103 (MDGNDNVTLL…LPFWDTPLNH (103 aa)) the chain is Extracellular. Residues Asn-6, Asn-18, and Asn-24 are each glycosylated (N-linked (GlcNAc...) asparagine). Positions 37–82 (APASSAGPGPGLSLGPGPSFGFSPGPTPTPEPTTSGLAGGAASHGP) are disordered. Positions 51 to 60 (GPGPSFGFSP) are enriched in low complexity. Residues 104–124 (GLNVFVGAALCITMLGLGCTV) form a helical membrane-spanning segment. At 125-140 (DVNHFGAHVRRPVGAL) the chain is on the cytoplasmic side. Residues 141–161 (LAALCQFGLLPLLAFLLALAF) traverse the membrane as a helical segment. Over 162 to 197 (KLDEVAAVAVLLCGCCPGGNLSNLMSLLVDGDMNLS) the chain is Extracellular. N-linked (GlcNAc...) asparagine glycosylation is found at Asn-181 and Asn-195. Residues 198 to 218 (IIMTISSTLLALVLMPLCLWI) traverse the membrane as a helical segment. Over 219-233 (YSWAWINTPIVQLLP) the chain is Cytoplasmic. A helical membrane pass occupies residues 234-254 (LGTVTLTLCSTLIPIGLGVFI). At 255–267 (RYKYSRVADYIVK) the chain is on the extracellular side. A helical transmembrane segment spans residues 268-288 (VSLWSLLVTLVVLFIMTGTML). Residues 289–291 (GPE) are Cytoplasmic-facing. Residues 292 to 312 (LLASIPAAVYVIAIFMPLAGY) form a helical membrane-spanning segment. Over 313–360 (ASGYGLATLFHLPPNCKRTVCLETGSQNVQLCTAILKLAFPPQFIGSM) the chain is Extracellular. Residues 361 to 381 (YMFPLLYALFQSAEAGIFVLI) traverse the membrane as a helical segment. Residues 382–437 (YKMYGSEMLHKRDPLDEDEDTDISYKKLKEEEMADTSYGTVKAENIIMMETAQTSL) lie on the Cytoplasmic side of the membrane.

It belongs to the bile acid:sodium symporter (BASS) (TC 2.A.28) family. In terms of processing, activated following N-terminal proteolytic cleavage by thrombin and/or proteases. As to expression, highly expressed in brain and small intestine, and moderately expressed in colon, heart, prostate, and testis. Very low levels were detected in kidney, liver, ovary, placenta, spleen, and thymus.

It localises to the cell membrane. Transporter for bile acids. This Homo sapiens (Human) protein is Sodium/bile acid cotransporter 4 (SLC10A4).